A 196-amino-acid chain; its full sequence is CRISPR-associated exonuclease Cas4 (196 aa).

Residue cysteine 23 coordinates [4Fe-4S] cluster. Mn(2+) contacts are provided by histidine 50, aspartate 90, and glutamate 103. Residues cysteine 184, cysteine 187, and cysteine 193 each coordinate [4Fe-4S] cluster.

This sequence belongs to the CRISPR-associated exonuclease Cas4 family. Requires Mg(2+) as cofactor. [4Fe-4S] cluster serves as cofactor.

The enzyme catalyses exonucleolytic cleavage in the 5'- to 3'-direction to yield nucleoside 3'-phosphates.. CRISPR (clustered regularly interspaced short palindromic repeat) is an adaptive immune system that provides protection against mobile genetic elements (viruses, transposable elements and conjugative plasmids). CRISPR clusters contain sequences complementary to antecedent mobile elements and target invading nucleic acids. CRISPR clusters are transcribed and processed into CRISPR RNA (crRNA). This may be a 5' to 3' ssDNA exonuclease. This is CRISPR-associated exonuclease Cas4 from Francisella tularensis subsp. novicida (strain U112).